Consider the following 98-residue polypeptide: NADH-ubiquinone oxidoreductase chain 4L (98 aa).

A run of 3 helical transmembrane segments spans residues 2–22, 26–46, and 58–79; these read PSTF…TLMF, LMST…MTSV, and PIPI…ALLV.

The protein belongs to the complex I subunit 4L family. Core subunit of respiratory chain NADH dehydrogenase (Complex I) which is composed of 45 different subunits.

It is found in the mitochondrion inner membrane. The catalysed reaction is a ubiquinone + NADH + 5 H(+)(in) = a ubiquinol + NAD(+) + 4 H(+)(out). In terms of biological role, core subunit of the mitochondrial membrane respiratory chain NADH dehydrogenase (Complex I) which catalyzes electron transfer from NADH through the respiratory chain, using ubiquinone as an electron acceptor. Part of the enzyme membrane arm which is embedded in the lipid bilayer and involved in proton translocation. The protein is NADH-ubiquinone oxidoreductase chain 4L of Mus musculus (Mouse).